A 274-amino-acid chain; its full sequence is 2,3,4,5-tetrahydropyridine-2,6-dicarboxylate N-succinyltransferase (274 aa).

Positions 106 and 143 each coordinate substrate.

The protein belongs to the transferase hexapeptide repeat family. In terms of assembly, homotrimer.

Its subcellular location is the cytoplasm. It catalyses the reaction (S)-2,3,4,5-tetrahydrodipicolinate + succinyl-CoA + H2O = (S)-2-succinylamino-6-oxoheptanedioate + CoA. Its pathway is amino-acid biosynthesis; L-lysine biosynthesis via DAP pathway; LL-2,6-diaminopimelate from (S)-tetrahydrodipicolinate (succinylase route): step 1/3. This chain is 2,3,4,5-tetrahydropyridine-2,6-dicarboxylate N-succinyltransferase, found in Rickettsia akari (strain Hartford).